Reading from the N-terminus, the 192-residue chain is UPF0301 protein Bcen_0382 (192 aa).

Belongs to the UPF0301 (AlgH) family.

The protein is UPF0301 protein Bcen_0382 of Burkholderia orbicola (strain AU 1054).